The following is a 92-amino-acid chain: DNA-directed RNA polymerase subunit Rpo11 (92 aa).

This sequence belongs to the archaeal Rpo11/eukaryotic RPB11/RPC19 RNA polymerase subunit family. Part of the 13-subunit RNA polymerase complex.

It localises to the cytoplasm. The enzyme catalyses RNA(n) + a ribonucleoside 5'-triphosphate = RNA(n+1) + diphosphate. In terms of biological role, DNA-dependent RNA polymerase (RNAP) catalyzes the transcription of DNA into RNA using the four ribonucleoside triphosphates as substrates. This Saccharolobus solfataricus (strain ATCC 35092 / DSM 1617 / JCM 11322 / P2) (Sulfolobus solfataricus) protein is DNA-directed RNA polymerase subunit Rpo11.